A 399-amino-acid polypeptide reads, in one-letter code: Flavohemoprotein (399 aa).

Residues 1–138 (MLAEKTRSII…IADIFITVEK (138 aa)) enclose the Globin domain. Thr-22 bears the Phosphothreonine mark. His-85 lines the heme b pocket. Active-site charge relay system residues include Tyr-95 and Glu-137. Residues 146-399 (WPGWKPFDIT…FGPKMSTVQV (254 aa)) form a reductase region. The FAD-binding FR-type domain maps to 147 to 264 (PGWKPFDITA…SAPAGDFAIN (118 aa)). FAD-binding positions include Tyr-189 and 207–210 (RHYS). 281–286 (GVGVTP) is an NADP(+) binding site. Residue 389–392 (PFGP) participates in FAD binding.

The protein belongs to the globin family. Two-domain flavohemoproteins subfamily. It in the C-terminal section; belongs to the flavoprotein pyridine nucleotide cytochrome reductase family. The cofactor is FAD. It depends on heme b as a cofactor.

It localises to the cytoplasm. The enzyme catalyses 2 nitric oxide + NADPH + 2 O2 = 2 nitrate + NADP(+) + H(+). It catalyses the reaction 2 nitric oxide + NADH + 2 O2 = 2 nitrate + NAD(+) + H(+). Is involved in NO detoxification in an aerobic process, termed nitric oxide dioxygenase (NOD) reaction that utilizes O(2) and NAD(P)H to convert NO to nitrate, which protects the fungus from various noxious nitrogen compounds. Therefore, plays a central role in the inducible response to nitrosative stress. In terms of biological role, in the presence of oxygen and NADH, it has NADH oxidase activity, which leads to the generation of superoxide and H(2)O(2). Under anaerobic conditions, it also exhibits nitric oxide reductase and FAD reductase activities. However, all these reactions are much lower than NOD activity. This is Flavohemoprotein (YHB1) from Saccharomyces cerevisiae (strain ATCC 204508 / S288c) (Baker's yeast).